Consider the following 78-residue polypeptide: D-alanyl carrier protein (78 aa).

A Carrier domain is found at 1–78 (MNIQETVLNI…QIIQQVEALQ (78 aa)). An O-(pantetheine 4'-phosphoryl)serine modification is found at Ser36.

Belongs to the DltC family. In terms of processing, 4'-phosphopantetheine is transferred from CoA to a specific serine of apo-DCP.

The protein localises to the cytoplasm. It functions in the pathway cell wall biogenesis; lipoteichoic acid biosynthesis. Functionally, carrier protein involved in the D-alanylation of lipoteichoic acid (LTA). The loading of thioester-linked D-alanine onto DltC is catalyzed by D-alanine--D-alanyl carrier protein ligase DltA. The DltC-carried D-alanyl group is further transferred to cell membrane phosphatidylglycerol (PG) by forming an ester bond, probably catalyzed by DltD. D-alanylation of LTA plays an important role in modulating the properties of the cell wall in Gram-positive bacteria, influencing the net charge of the cell wall. The polypeptide is D-alanyl carrier protein (Enterococcus faecalis (strain ATCC 700802 / V583)).